We begin with the raw amino-acid sequence, 382 residues long: B3 domain-containing protein Os03g0622100 (382 aa).

Residues 29–123 constitute a DNA-binding region (TF-B3 1); sequence CKHFLTYMVG…SFDVLIFDPS (95 aa). Composition is skewed to basic and acidic residues over residues 136–158 and 193–202; these read RGFGREEKSAGAEGGGRDGDKNG and QDHREEKKEG. Positions 136–222 are disordered; the sequence is RGFGREEKSA…EDVDKDGEDR (87 aa). Residues 203 to 218 show a composition bias toward acidic residues; it reads DDEDEDEDEDEDVDKD. A DNA-binding region (TF-B3 2) is located at residues 261–363; the sequence is KVIHASHLLS…AGDRLRRRPR (103 aa).

The protein resides in the nucleus. This chain is B3 domain-containing protein Os03g0622100, found in Oryza sativa subsp. japonica (Rice).